Reading from the N-terminus, the 104-residue chain is Large ribosomal subunit protein uL24 (104 aa).

Belongs to the universal ribosomal protein uL24 family. Part of the 50S ribosomal subunit.

One of two assembly initiator proteins, it binds directly to the 5'-end of the 23S rRNA, where it nucleates assembly of the 50S subunit. Its function is as follows. One of the proteins that surrounds the polypeptide exit tunnel on the outside of the subunit. This is Large ribosomal subunit protein uL24 from Clostridium botulinum (strain Eklund 17B / Type B).